The primary structure comprises 395 residues: Phosphopentomutase (395 aa).

Residues Asp14, Asp286, His291, Asp327, His328, and His339 each coordinate Mn(2+).

It belongs to the phosphopentomutase family. Mn(2+) is required as a cofactor.

It localises to the cytoplasm. It catalyses the reaction 2-deoxy-alpha-D-ribose 1-phosphate = 2-deoxy-D-ribose 5-phosphate. The catalysed reaction is alpha-D-ribose 1-phosphate = D-ribose 5-phosphate. The protein operates within carbohydrate degradation; 2-deoxy-D-ribose 1-phosphate degradation; D-glyceraldehyde 3-phosphate and acetaldehyde from 2-deoxy-alpha-D-ribose 1-phosphate: step 1/2. In terms of biological role, isomerase that catalyzes the conversion of deoxy-ribose 1-phosphate (dRib-1-P) and ribose 1-phosphate (Rib-1-P) to deoxy-ribose 5-phosphate (dRib-5-P) and ribose 5-phosphate (Rib-5-P), respectively. This is Phosphopentomutase from Staphylococcus haemolyticus (strain JCSC1435).